The chain runs to 324 residues: MSATIASLRESLCSETTPLPIRFRALFSLKHLAVQNKGTADSLSAIDAIAAAFASPSALLKHELAYCLGQTGSDAAIPHLTQVLEDLQEDPMCRHEAAEALGALGKAESLGVLQKYLHREGEDVSVKETCEIAIDRIEWENSEERKQEKLRQSDFASVDPAPPMPEDDEKQTVETLEKKLLDTSLPLFKRYRAMFALRDLASPPDLPTAVPAILALAKGLKDESALFRHEIAFVFGQLSHPASIPALTEALSNLDEVSMVRHEAAEALGSLGDEEGVEETLLKFLHDKEKVVRESVIVALDMAEFEQSGQAEYALIPEVASKAS.

HEAT-like PBS-type repeat units follow at residues 60–86 (LKHE…VLED) and 94–119 (RHEA…YLHR). Fe cation is bound by residues histidine 62, glutamate 63, histidine 95, and glutamate 96. Residues 143 to 152 (EERKQEKLRQ) show a composition bias toward basic and acidic residues. A disordered region spans residues 143–171 (EERKQEKLRQSDFASVDPAPPMPEDDEKQ). 3 HEAT-like PBS-type repeats span residues 189–219 (KRYR…LAKG), 227–253 (FRHE…ALSN), and 260–287 (VRHE…FLHD). Histidine 229, glutamate 230, histidine 262, and glutamate 263 together coordinate Fe cation.

This sequence belongs to the deoxyhypusine hydroxylase family. Fe(2+) is required as a cofactor.

The protein localises to the cytoplasm. Its subcellular location is the nucleus. The enzyme catalyses [eIF5A protein]-deoxyhypusine + AH2 + O2 = [eIF5A protein]-hypusine + A + H2O. It functions in the pathway protein modification; eIF5A hypusination. In terms of biological role, catalyzes the hydroxylation of the N(6)-(4-aminobutyl)-L-lysine intermediate to form hypusine, an essential post-translational modification only found in mature eIF-5A factor. The polypeptide is Deoxyhypusine hydroxylase (lia1) (Neurospora crassa (strain ATCC 24698 / 74-OR23-1A / CBS 708.71 / DSM 1257 / FGSC 987)).